The chain runs to 151 residues: Large ribosomal subunit protein bL9 (151 aa).

This sequence belongs to the bacterial ribosomal protein bL9 family.

Binds to the 23S rRNA. The protein is Large ribosomal subunit protein bL9 of Francisella tularensis subsp. tularensis (strain FSC 198).